The following is a 68-amino-acid chain: Alpha-conotoxin-like Ca1.2 (68 aa).

Residues 1–21 form the signal peptide; sequence MGMRMMFTVFLLVVLATTVVS. A propeptide spanning residues 22–48 is cleaved from the precursor; that stretch reads FTSDRASEGRNAAAKDKASDLVALTVR. 2 disulfides stabilise this stretch: Cys-50/Cys-56 and Cys-51/Cys-64. The interval 52 to 54 is lacks the Ser-Xaa-Pro motif that is crucial for potent interaction with nAChR; the sequence is AIR. Tyr-63 carries the post-translational modification Sulfotyrosine. Cys-64 bears the Cysteine amide mark. Positions 65-68 are excised as a propeptide; sequence GGIY.

Belongs to the conotoxin A superfamily. In terms of tissue distribution, expressed by the venom duct.

It localises to the secreted. Alpha-conotoxins act on postsynaptic membranes, they bind to the nicotinic acetylcholine receptors (nAChR) and thus inhibit them. Has possibly a distinct nAChR binding mode from other alpha-conotoxins, due to a different three residue motif (lacks the Ser-Xaa-Pro motif). The chain is Alpha-conotoxin-like Ca1.2 from Conus caracteristicus (Characteristic cone).